The sequence spans 173 residues: dCTP deaminase, dUMP-forming (173 aa).

DCTP-binding positions include 93–98, aspartate 111, 119–121, glutamine 138, and tyrosine 151; these read RSSTGR and TLE. Glutamate 121 (proton donor/acceptor) is an active-site residue.

Belongs to the dCTP deaminase family. As to quaternary structure, homotrimer.

It carries out the reaction dCTP + 2 H2O = dUMP + NH4(+) + diphosphate. Its pathway is pyrimidine metabolism; dUMP biosynthesis; dUMP from dCTP: step 1/1. Bifunctional enzyme that catalyzes both the deamination of dCTP to dUTP and the hydrolysis of dUTP to dUMP without releasing the toxic dUTP intermediate. The polypeptide is dCTP deaminase, dUMP-forming (Clostridium botulinum (strain Alaska E43 / Type E3)).